Consider the following 4036-residue polypeptide: Hybrid PKS-NRPS synthetase iliA (4036 aa).

The 433-residue stretch at 7–439 (PEPIAVIGSA…GTNAHAIIES (433 aa)) folds into the Ketosynthase family 3 (KS3) domain. Active-site for beta-ketoacyl synthase activity residues include Cys181, His318, and His359. Residues 561–886 (IFTGQGAQWP…LKRNGSDVEA (326 aa)) form a malonyl-CoA:ACP transacylase (MAT) domain region. The interval 955–1092 (HELLGRRTPD…GDLVVHLGAD (138 aa)) is N-terminal hotdog fold. The dehydratase (DH) domain stretch occupies residues 955–1262 (HELLGRRTPD…ATNMVGEQDA (308 aa)). In terms of domain architecture, PKS/mFAS DH spans 955-1263 (HELLGRRTPD…TNMVGEQDAS (309 aa)). The active-site Proton acceptor; for dehydratase activity is the His987. The tract at residues 1109–1263 (LVNIDGERVY…TNMVGEQDAS (155 aa)) is C-terminal hotdog fold. The active-site Proton donor; for dehydratase activity is Asp1168. Residues 1402–1601 (EDDMLDRFYM…FSGADTVMHD (200 aa)) are methyltransferase (MT) domain. The segment at 2136-2277 (KTYFMVGMAG…SVATVIGNIG (142 aa)) is ketoreductase (KR) domain. Residues 2425–2502 (EAVAAVVKAF…QVCTWATKKV (78 aa)) enclose the Carrier 1 domain. O-(pantetheine 4'-phosphoryl)serine is present on Ser2462. Disordered stretches follow at residues 2520–2583 (AEKT…KLGT) and 2597–2621 (DADA…NRPE). Residues 2530–2540 (APAPDAAPAPA) show a composition bias toward pro residues. Positions 2627 to 3054 (IMSQAQSRIW…HLDITECEIY (428 aa)) are condensation (C) domain. Residues 3088-3485 (SLHSDKSAVK…GTLLCLGRLD (398 aa)) form an adenylation (A) (KR) domain region. Positions 3088–3485 (SLHSDKSAVK…GTLLCLGRLD (398 aa)) are reductase (RED) domain. The 80-residue stretch at 3596–3675 (EKMTIREGEV…EMARRIDEHQ (80 aa)) folds into the Carrier 2 domain. Ser3635 is subject to O-(pantetheine 4'-phosphoryl)serine.

It in the C-terminal section; belongs to the NRP synthetase family.

The enzyme catalyses L-tyrosine + holo-[ACP] + 7 malonyl-CoA + acetyl-CoA + 8 AH2 + 2 S-adenosyl-L-methionine + ATP + 4 H(+) = N-[(4E,6E,10S,12Z,14E)-6,10-dimethyl-3-oxohexadeca-4,6,12,14-tetraenoyl]-L-tyrosyl-[ACP] + 8 A + AMP + 2 S-adenosyl-L-homocysteine + 7 CO2 + diphosphate + 8 CoA + 6 H2O. It participates in mycotoxin biosynthesis. Hybrid PKS-NRPS synthetase; part of the gene cluster that mediates the biosynthesis of ilicicolin H, a 4-hydroxy-2-pyridonealkaloid that has potent and broad antifungal activities by inhibiting the mitochondrial respiration chain. IliA assembles the backbone of ilicicolin H. The PKS portion and trans-acting enoyl reductase iliB work together to construct an octaketide, and two methyl groups are introduced by the MT domain during the chain assembly. The nascent chain is then condensed with tyrosine, catalyzed by the C domain, and the resulting PKS-NRPS hybrid is offloaded by the RED domain to form an advanced tetramic acid intermediate. The biosynthesis of ilicicolin H starts with formation of the tetramic acid by the hybrid PKS-NRPS synthetase iliA with the partnering trans-enoyl reductase iliB since iliA lacks a designated enoylreductase (ER) domain. The cytochrome P450 monooxygenase iliC then catalyzes the ring expansion of the tetramate to the acyclic 2-pyridone. The pericyclase iliD further converts the acyclic 2-pyridone into 8-epi-ilicicolin H. 8-epi-ilicicolin H might then spontaneously convert to ilicicolin H, since ilicicolin H is produced in the absence of the epimerase iliE, in contrast to what was observed for the Talaromyces variabilis ilicolin H biosynthetic pathway. The protein is Hybrid PKS-NRPS synthetase iliA of Neonectria sp. (strain DH2).